The following is a 189-amino-acid chain: Putative ankyrin repeat protein L38 (189 aa).

An ANK repeat occupies 108–137; sequence YGKTPLITAIKSGNCIMVKKLIDYGADFNK.

The protein is Putative ankyrin repeat protein L38 of Acanthamoeba polyphaga mimivirus (APMV).